The primary structure comprises 462 residues: Protein MOS2 (462 aa).

Positions 1–10 are enriched in low complexity; it reads MKLSFSLPSK. The disordered stretch occupies residues 1-32; sequence MKLSFSLPSKSKPKVTATTADGNNAVDDGTSK. In terms of domain architecture, G-patch spans 156 to 202; that stretch reads VDGFGAALMAGYGWKPGKGIGKNAKEDVEIKEYKKWTAKEGLGFDPD. Residues 231-258 form the KOW 1 domain; that stretch reads VFFVGKEVRIIAGRDVGLKGKIVEKPGS. Residues 301–336 are compositionally biased toward basic and acidic residues; sequence DREKDKKTSGRGRGAERGSRSEVRASEKQDRGQTRE. The interval 301–340 is disordered; the sequence is DREKDKKTSGRGRGAERGSRSEVRASEKQDRGQTRERKVK. Residues 401–428 form the KOW 2 domain; it reads LPRRGGPVLVLSGKHKGVYGNLVEKDLD.

Belongs to the MOS2 family.

Its subcellular location is the nucleus. In terms of biological role, required for innate and induced resistance to pathogens such as compatible and incompatible isolates of P.syringae and P.parasitica. This Arabidopsis thaliana (Mouse-ear cress) protein is Protein MOS2 (MOS2).